The following is a 510-amino-acid chain: Alpha-L-arabinofuranosidase B (510 aa).

Positions 1 to 24 are cleaved as a signal peptide; sequence MTMSRSSRSSVLALALATGSLVAA. The tract at residues 25–342 is catalytic; it reads GPCDIYSSGG…ADIVAAKYAT (318 aa). Disulfide bonds link cysteine 27–cysteine 37, cysteine 87–cysteine 92, and cysteine 182–cysteine 183. Asparagine 89 is a glycosylation site (N-linked (GlcNAc...) asparagine). Aspartate 225 serves as a coordination point for substrate. The active-site Nucleophile is the glutamate 227. 2 residues coordinate substrate: asparagine 228 and glycine 303. The active-site Proton donor is aspartate 304. Residues 343 to 510 are ABD; the sequence is TSLISGPALT…VSWVVADGFA (168 aa). A disulfide bridge links cysteine 412 with cysteine 450. The substrate site is built by histidine 427, asparagine 429, phenylalanine 430, aspartate 446, histidine 475, glutamate 477, leucine 480, and aspartate 500.

Belongs to the glycosyl hydrolase 54 family.

It localises to the secreted. The catalysed reaction is Hydrolysis of terminal non-reducing alpha-L-arabinofuranoside residues in alpha-L-arabinosides.. The protein operates within glycan metabolism; L-arabinan degradation. Alpha-L-arabinofuranosidase involved in the degradation of arabinoxylan, a major component of plant hemicellulose. Able to hydrolyze 1,5-, 1,3- and 1,2-alpha-linkages not only in L-arabinofuranosyl oligosaccharides, but also in polysaccharides containing terminal non-reducing L-arabinofuranoses in side chains, like L-arabinan, arabinogalactan and arabinoxylan. The sequence is that of Alpha-L-arabinofuranosidase B (abfB) from Emericella nidulans (strain FGSC A4 / ATCC 38163 / CBS 112.46 / NRRL 194 / M139) (Aspergillus nidulans).